A 180-amino-acid polypeptide reads, in one-letter code: Endoribonuclease YbeY (180 aa).

His136, His140, and His146 together coordinate Zn(2+).

Belongs to the endoribonuclease YbeY family. The cofactor is Zn(2+).

It is found in the cytoplasm. In terms of biological role, single strand-specific metallo-endoribonuclease involved in late-stage 70S ribosome quality control and in maturation of the 3' terminus of the 16S rRNA. The chain is Endoribonuclease YbeY from Synechococcus sp. (strain CC9902).